Here is a 554-residue protein sequence, read N- to C-terminus: Acurin A biosynthesis cluster MFS-type transporter (554 aa).

Helical transmembrane passes span 24 to 44 (WLIFLAIGIATFVAALDTSII), 60 to 80 (LYIWIINTYLLSSTVSSAIVG), 96 to 116 (LLIFAVGSAISGAARDTGMLL), 123 to 143 (GLGGGSITTLSEVLVCDMVSL), and 151 to 171 (GILGAAWTLAAVVGPIMGGGF). Residue asparagine 174 is glycosylated (N-linked (GlcNAc...) asparagine). 3 helical membrane passes run 179–199 (WIFYINLPIAGSSLFLIVTLL), 219–239 (WGGITLLTLGVTAILLSLTWA), and 251–271 (IVPLILGFLGLLGFIAYEALP). Asparagine 283 is a glycosylation site (N-linked (GlcNAc...) asparagine). Transmembrane regions (helical) follow at residues 289–309 (LFVMAFIYSLLLFWVCYFLPI), 324–344 (VMLFPVATTTAPAGIVAGILM), 352–372 (SFQYIGFALMTIACGLFTLLD), 385–405 (ILFGVGTGIVFTTGLPPILAS), 417–437 (TWIFMRNFGAIWGTAIPAAVF), and 496–516 (VWQVSIAFCGVGFLLCFLVKA).

This sequence belongs to the major facilitator superfamily.

The protein resides in the membrane. In terms of biological role, MFS-type transporter that may have a role in the biosynthesis of acurin A, a highly reduced polyketide coupled to a serine via a peptide bond; either in extra- or intracellular transport. The polypeptide is Acurin A biosynthesis cluster MFS-type transporter (Aspergillus aculeatus (strain ATCC 16872 / CBS 172.66 / WB 5094)).